We begin with the raw amino-acid sequence, 365 residues long: 1-aminocyclopropane-1-carboxylate oxidase homolog 1 (365 aa).

The Fe2OG dioxygenase domain occupies 212–313; the sequence is CTNSLLLLGH…RISVACFFSS (102 aa). Histidine 238, aspartate 240, and histidine 294 together coordinate Fe cation.

The protein belongs to the iron/ascorbate-dependent oxidoreductase family. Fe cation is required as a cofactor.

This is 1-aminocyclopropane-1-carboxylate oxidase homolog 1 from Arabidopsis thaliana (Mouse-ear cress).